Here is a 249-residue protein sequence, read N- to C-terminus: Solute carrier family 25 member 35 (249 aa).

Solcar repeat units lie at residues 1–90 (MDFL…AEAG) and 152–243 (QSWK…LRMV). Transmembrane regions (helical) follow at residues 38–58 (TYQRHYRNVFHAFITIGKVDG), 59–79 (LAALQRGLAPALLYQFLMNGI), 154–174 (WKVALAAAMVSGIAVVLAMTP), and 226–249 (LGPHTILSLFFWDQLRMVYYTYTK).

This sequence belongs to the mitochondrial carrier (TC 2.A.29) family.

It is found in the mitochondrion inner membrane. It carries out the reaction a dicarboxylate(in) + sulfate(out) = a dicarboxylate(out) + sulfate(in). Functionally, putative antiporter that exchanges dicarboxylates and sulfur oxoanions across the inner membrane of mitochondria. The protein is Solute carrier family 25 member 35 (SLC25A35) of Bos taurus (Bovine).